Here is a 431-residue protein sequence, read N- to C-terminus: MSKNKAHITVNDKKIELSVRKGTLGPDVIEIASLYKETDTFTYDPGFTSTASCESKITYIDGNEGILLYRGYPIDQLAEKGDFLESCYLLLYGELPTKQEKIDFDRCIMQHTMVHEQFARFFHGFRRDSHPMAVMIACLGAMSAFYHDSIDITDPQQRMIASIRLISKVPTLAAMAYKYSIGQAFVYPRNDLSYAANFLRMCFSVPCEEYKINPVLTRAMDRIFTLHADHEQNASTSTVRLAGSSGANPFACIAAGVACLWGPAHGGANEACLKMLQEIGSVERIPEFIARAKDKNDSFRLMGFGHRVYKNYDPRAKIMQQTCHEVLKELNIQNDPLLDIAITLENIALNDEYFIEKKLYPNVDFYSGITLKALGFPTEMFTVLFALARSVGWVAQWKEMIEDPAQKISRPRQLYTGYAAREYIPIDKRVN.

Active-site residues include histidine 306 and aspartate 364.

It belongs to the citrate synthase family.

It carries out the reaction oxaloacetate + acetyl-CoA + H2O = citrate + CoA + H(+). The protein operates within carbohydrate metabolism; tricarboxylic acid cycle; isocitrate from oxaloacetate: step 1/2. This chain is Citrate synthase (gltA), found in Bartonella henselae (strain ATCC 49882 / DSM 28221 / CCUG 30454 / Houston 1) (Rochalimaea henselae).